The primary structure comprises 430 residues: tRNA(Ile)-lysidine synthase (430 aa).

27 to 32 (SGGSDS) is an ATP binding site.

The protein belongs to the tRNA(Ile)-lysidine synthase family.

It is found in the cytoplasm. The enzyme catalyses cytidine(34) in tRNA(Ile2) + L-lysine + ATP = lysidine(34) in tRNA(Ile2) + AMP + diphosphate + H(+). Functionally, ligates lysine onto the cytidine present at position 34 of the AUA codon-specific tRNA(Ile) that contains the anticodon CAU, in an ATP-dependent manner. Cytidine is converted to lysidine, thus changing the amino acid specificity of the tRNA from methionine to isoleucine. This is tRNA(Ile)-lysidine synthase from Rickettsia typhi (strain ATCC VR-144 / Wilmington).